The chain runs to 177 residues: Large ribosomal subunit protein uL6 (177 aa).

It belongs to the universal ribosomal protein uL6 family. As to quaternary structure, part of the 50S ribosomal subunit.

Its function is as follows. This protein binds to the 23S rRNA, and is important in its secondary structure. It is located near the subunit interface in the base of the L7/L12 stalk, and near the tRNA binding site of the peptidyltransferase center. In Sphingopyxis alaskensis (strain DSM 13593 / LMG 18877 / RB2256) (Sphingomonas alaskensis), this protein is Large ribosomal subunit protein uL6.